A 420-amino-acid polypeptide reads, in one-letter code: CinA-like protein (420 aa).

It belongs to the CinA family.

The chain is CinA-like protein from Geotalea uraniireducens (strain Rf4) (Geobacter uraniireducens).